Consider the following 491-residue polypeptide: Ketol-acid reductoisomerase (NADP(+)) (491 aa).

One can recognise a KARI N-terminal Rossmann domain in the interval 14 to 208 (LDQLGRCRFM…GGHRAGVLES (195 aa)). NADP(+) contacts are provided by residues 45–48 (CGAQ), Arg68, Arg76, Ser78, and 108–110 (DKQ). Residue His132 is part of the active site. Residue Gly158 participates in NADP(+) binding. KARI C-terminal knotted domains lie at 209-344 (SFVA…NAPK) and 345-485 (YEGK…MTDM). Residues Asp217, Glu221, Glu389, and Glu393 each coordinate Mg(2+). Residue Ser414 participates in substrate binding.

It belongs to the ketol-acid reductoisomerase family. Requires Mg(2+) as cofactor.

The catalysed reaction is (2R)-2,3-dihydroxy-3-methylbutanoate + NADP(+) = (2S)-2-acetolactate + NADPH + H(+). The enzyme catalyses (2R,3R)-2,3-dihydroxy-3-methylpentanoate + NADP(+) = (S)-2-ethyl-2-hydroxy-3-oxobutanoate + NADPH + H(+). It functions in the pathway amino-acid biosynthesis; L-isoleucine biosynthesis; L-isoleucine from 2-oxobutanoate: step 2/4. It participates in amino-acid biosynthesis; L-valine biosynthesis; L-valine from pyruvate: step 2/4. Involved in the biosynthesis of branched-chain amino acids (BCAA). Catalyzes an alkyl-migration followed by a ketol-acid reduction of (S)-2-acetolactate (S2AL) to yield (R)-2,3-dihydroxy-isovalerate. In the isomerase reaction, S2AL is rearranged via a Mg-dependent methyl migration to produce 3-hydroxy-3-methyl-2-ketobutyrate (HMKB). In the reductase reaction, this 2-ketoacid undergoes a metal-dependent reduction by NADPH to yield (R)-2,3-dihydroxy-isovalerate. The protein is Ketol-acid reductoisomerase (NADP(+)) of Pasteurella multocida (strain Pm70).